The chain runs to 154 residues: Large ribosomal subunit protein uL13 (154 aa).

The protein belongs to the universal ribosomal protein uL13 family. In terms of assembly, part of the 50S ribosomal subunit.

This protein is one of the early assembly proteins of the 50S ribosomal subunit, although it is not seen to bind rRNA by itself. It is important during the early stages of 50S assembly. The protein is Large ribosomal subunit protein uL13 of Rhodospirillum centenum (strain ATCC 51521 / SW).